We begin with the raw amino-acid sequence, 133 residues long: Profilin-1 (133 aa).

C95 and C117 are oxidised to a cystine.

It belongs to the profilin family. In terms of assembly, dimer and tetramer. Occurs in many kinds of cells as a complex with monomeric actin in a 1:1 ratio.

The protein localises to the cytoplasm. The protein resides in the cytoskeleton. Its function is as follows. Binds to actin and affects the structure of the cytoskeleton. At high concentrations, profilin prevents the polymerization of actin, whereas it enhances it at low concentrations. By binding to PIP2, it inhibits the formation of IP3 and DG. Possesses high binding affinity for poly(L-proline). This Artemisia vulgaris (Mugwort) protein is Profilin-1.